The sequence spans 395 residues: Chaperone protein DnaJ 2 (395 aa).

The region spanning D10–K75 is the J domain. Residues G165–T242 form a CR-type zinc finger. Residues C178, C181, C194, C197, C216, C219, C230, and C233 each contribute to the Zn(2+) site. CXXCXGXG motif repeat units follow at residues C178–G185, C194–G201, C216–G223, and C230–G237.

This sequence belongs to the DnaJ family. In terms of assembly, homodimer. Requires Zn(2+) as cofactor.

It localises to the cytoplasm. Participates actively in the response to hyperosmotic and heat shock by preventing the aggregation of stress-denatured proteins and by disaggregating proteins, also in an autonomous, DnaK-independent fashion. Unfolded proteins bind initially to DnaJ; upon interaction with the DnaJ-bound protein, DnaK hydrolyzes its bound ATP, resulting in the formation of a stable complex. GrpE releases ADP from DnaK; ATP binding to DnaK triggers the release of the substrate protein, thus completing the reaction cycle. Several rounds of ATP-dependent interactions between DnaJ, DnaK and GrpE are required for fully efficient folding. Also involved, together with DnaK and GrpE, in the DNA replication of plasmids through activation of initiation proteins. The polypeptide is Chaperone protein DnaJ 2 (Corynebacterium efficiens (strain DSM 44549 / YS-314 / AJ 12310 / JCM 11189 / NBRC 100395)).